Consider the following 282-residue polypeptide: Glutamate--LysW ligase ArgX (282 aa).

Residues lysine 87, lysine 127, 131–137, and 167–178 each bind ATP; these read GSWGRLV and QEYIQYKGRDIR. Residues 91 to 277 enclose the ATP-grasp domain; sequence YSKLYREGIP…VAQKLVEYIK (187 aa). Position 192 (arginine 192) interacts with substrate. Asparagine 202 serves as a coordination point for ATP. 203 to 204 serves as a coordination point for substrate; the sequence is VA. Mg(2+) contacts are provided by aspartate 237, glutamate 250, and asparagine 252. A substrate-binding site is contributed by 256–260; that stretch reads EFKGF. A GF motif that is essential for ArgX substrate specificity motif is present at residues 259-260; sequence GF.

This sequence belongs to the RimK family. LysX subfamily. Homotetramer. Interacts with LysW. Requires Mg(2+) as cofactor.

The catalysed reaction is [amino-group carrier protein]-C-terminal-L-glutamate + L-glutamate + ATP = [amino-group carrier protein]-C-terminal-gamma-(L-glutamyl)-L-glutamate + ADP + phosphate + H(+). It functions in the pathway amino-acid biosynthesis; L-arginine biosynthesis. In terms of biological role, catalyzes the ATP-dependent formation of a covalent bond between the amino group of glutamate and the gamma-carboxyl group of the C-terminal glutamate residue in LysW. The protein is Glutamate--LysW ligase ArgX of Sulfurisphaera tokodaii (strain DSM 16993 / JCM 10545 / NBRC 100140 / 7) (Sulfolobus tokodaii).